The sequence spans 528 residues: Protein arginine N-methyltransferase 3 (528 aa).

Residues 1-43 are disordered; the sequence is MCSLAAGNGRGAELGPEPLELSDSGDDAGWEDEDADTEPAHGR. C2 carries the post-translational modification N-acetylcysteine. S22 and S24 each carry phosphoserine. The span at 23 to 37 shows a compositional bias: acidic residues; the sequence is DSGDDAGWEDEDADT. Residues 46 to 69 form a C2H2-type zinc finger; it reads TPCLFCDRLFASAEETFSHCKLEH. The residue at position 169 (S169) is a Phosphoserine. The mediates interaction with ALDH1A1 stretch occupies residues 184–528; sequence MKQFAQDFVM…NSSTQTYSLQ (345 aa). The SAM-dependent MTase PRMT-type domain occupies 214-528; sequence DGVYFSSYGH…NSSTQTYSLQ (315 aa). Residues R236, G260, D282, S284, I310, and E311 each coordinate S-adenosyl-L-homocysteine. Catalysis depends on residues E326 and E335.

The protein belongs to the class I-like SAM-binding methyltransferase superfamily. Protein arginine N-methyltransferase family. In terms of assembly, monomer and homodimer. Interacts with EPB41L3 (via FERM domain); the interaction is direct and inhibits the protein-arginine N-methyltransferase activity of PRMT3. Interacts with the 40S ribosomal protein RPS2. Interacts with ALDH1A1; the interaction is direct, inhibits ALDH1A1 aldehyde dehydrogenase activity and is independent of the methyltransferase activity of PRMT3.

The protein localises to the cytoplasm. The protein resides in the cytosol. It localises to the nucleus. It carries out the reaction L-arginyl-[protein] + S-adenosyl-L-methionine = N(omega)-methyl-L-arginyl-[protein] + S-adenosyl-L-homocysteine + H(+). The enzyme catalyses L-arginyl-[protein] + 2 S-adenosyl-L-methionine = N(omega),N(omega)-dimethyl-L-arginyl-[protein] + 2 S-adenosyl-L-homocysteine + 2 H(+). With respect to regulation, inhibited by N-ethylmaleimide and high concentrations of zinc chloride. Functionally, protein-arginine N-methyltransferase that catalyzes both the monomethylation and asymmetric dimethylation of the guanidino nitrogens of arginine residues in target proteins, and therefore falls into the group of type I methyltransferases. Catalyzes the asymmetric arginine dimethylation at multiple sites in the Arg/Gly-rich region of small ribosomal subunit protein uS5/RPS2. Also appears to methylate other ribosomal proteins. May regulate retinoic acid synthesis and signaling by inhibiting ALDH1A1 retinal dehydrogenase activity. Contributes to methylation of histone H4 'Arg-3', a specific tag for epigenetic transcriptional activation. Promotes osteogenesis. This Mus musculus (Mouse) protein is Protein arginine N-methyltransferase 3.